The sequence spans 61 residues: uncharacterized protein (61 aa).

This is an uncharacterized protein from Frog virus 3 (isolate Goorha) (FV-3).